Reading from the N-terminus, the 279-residue chain is uncharacterized protein (279 aa).

The tract at residues N233–I279 is disordered. Positions V246–L259 are enriched in polar residues. Positions N260–N271 are enriched in low complexity.

This is an uncharacterized protein from Buchnera aphidicola subsp. Baizongia pistaciae (strain Bp).